The following is a 394-amino-acid chain: GDSL esterase/lipase At2g27360 (394 aa).

The first 24 residues, 1-24 (MASQDCHMLLSFFISTFLITVVTS), serve as a signal peptide directing secretion. The active-site Nucleophile is the serine 40. Asparagine 136 and asparagine 319 each carry an N-linked (GlcNAc...) asparagine glycan. Active-site residues include aspartate 344 and histidine 347. Asparagine 371 and asparagine 382 each carry an N-linked (GlcNAc...) asparagine glycan.

Belongs to the 'GDSL' lipolytic enzyme family.

The protein resides in the secreted. The sequence is that of GDSL esterase/lipase At2g27360 from Arabidopsis thaliana (Mouse-ear cress).